Consider the following 118-residue polypeptide: Ribulose bisphosphate carboxylase small subunit (118 aa).

The protein belongs to the RuBisCO small chain family. As to quaternary structure, heterohexadecamer of 8 large and 8 small subunits.

In terms of biological role, ruBisCO catalyzes two reactions: the carboxylation of D-ribulose 1,5-bisphosphate, the primary event in carbon dioxide fixation, as well as the oxidative fragmentation of the pentose substrate. Both reactions occur simultaneously and in competition at the same active site. Although the small subunit is not catalytic it is essential for maximal activity. In Thiobacillus denitrificans (strain ATCC 25259 / T1), this protein is Ribulose bisphosphate carboxylase small subunit.